We begin with the raw amino-acid sequence, 330 residues long: Polyprenal reductase (330 aa).

At 1–19 (MASWVGTELSALNPLRTLW) the chain is on the cytoplasmic side. The chain crosses the membrane as a helical span at residues 20 to 40 (LALAAAFLLALLLQLAPAGLL). Residues 41 to 74 (PNCALFQDLIRYGKTKLSGPRRPAVCRAFDVPKR) are Lumenal-facing. Residues 75 to 95 (YFSHFYVVSVLWNGFLLWFLS) traverse the membrane as a helical segment. Over 96–132 (RSLFLGAPFPNWLRALLRTLGSTQFRALEMESKASQM) the chain is Cytoplasmic. Residues 133-153 (LVGELALSAFLVLVFLWVHSV) traverse the membrane as a helical segment. Residues 154–168 (RRLFECFYISVFSNA) are Lumenal-facing. A helical transmembrane segment spans residues 169–189 (VMHVVQYCFGLVYYVLVGLTV). Residues 190-206 (LSQVPMDDKNVYMLGKN) lie on the Cytoplasmic side of the membrane. The helical transmembrane segment at 207 to 227 (LLLPARWFHVLGMMMFLWSSA) threads the bilayer. At 228 to 277 (HQYECHVILSNLRRNKKGAIVHCQHRIPFGDWFEYVSSANYLAELMIYIS) the chain is on the lumenal side. A helical membrane pass occupies residues 278 to 298 (MAVTFGFHNFTWWLVVAYVFF). Topologically, residues 299 to 330 (CQALSAFFNHKFYKSTFVSYPKHRKAFLPFLF) are cytoplasmic.

Belongs to the steroid 5-alpha reductase family. Polyprenal reductase subfamily.

It is found in the endoplasmic reticulum membrane. The enzyme catalyses a di-trans,poly-cis-dolichal + NADP(+) = a di-trans,poly-cis-polyprenal + NADPH + H(+). It catalyses the reaction a 3-oxo-5alpha-steroid + NADP(+) = a 3-oxo-Delta(4)-steroid + NADPH + H(+). It carries out the reaction androst-4-ene-3,17-dione + NADPH + H(+) = 5alpha-androstan-3,17-dione + NADP(+). The catalysed reaction is 17beta-hydroxy-5alpha-androstan-3-one + NADP(+) = testosterone + NADPH + H(+). Its pathway is protein modification; protein glycosylation. Its function is as follows. Plays a key role in early steps of protein N-linked glycosylation by being involved in the conversion of polyprenol into dolichol. Acts as a polyprenal reductase that mediates the reduction of polyprenal into dolichal in a NADP-dependent mechanism. Dolichols are required for the synthesis of dolichol-linked monosaccharides and the oligosaccharide precursor used for N-glycosylation. Also able to convert testosterone (T) into 5-alpha-dihydrotestosterone (DHT). The protein is Polyprenal reductase of Mesocricetus auratus (Golden hamster).